Here is a 169-residue protein sequence, read N- to C-terminus: Cell division inhibitor SulA (169 aa).

Residues 1 to 22 form a disordered region; the sequence is MHTSIYANRSTSFSPSAGNDTQ. A ftsZ binding region spans residues 106-112; it reads ALRTGNY. The tract at residues 162–169 is lon protease binding; it reads KIHSNLYH.

Belongs to the SulA family. In terms of assembly, interacts with FtsZ. Post-translationally, is rapidly cleaved and degraded by the Lon protease once DNA damage is repaired.

In terms of biological role, component of the SOS system and an inhibitor of cell division. Accumulation of SulA causes rapid cessation of cell division and the appearance of long, non-septate filaments. In the presence of GTP, binds a polymerization-competent form of FtsZ in a 1:1 ratio, thus inhibiting FtsZ polymerization and therefore preventing it from participating in the assembly of the Z ring. This mechanism prevents the premature segregation of damaged DNA to daughter cells during cell division. This is Cell division inhibitor SulA from Enterobacter sp. (strain 638).